The following is a 293-amino-acid chain: Diaminopimelate epimerase (293 aa).

Positions 13, 46, and 66 each coordinate substrate. Cysteine 75 acts as the Proton donor in catalysis. Residues 76-77 (GN), asparagine 162, asparagine 195, and 213-214 (ER) each bind substrate. Residue cysteine 222 is the Proton acceptor of the active site. 223–224 (GT) contacts substrate.

This sequence belongs to the diaminopimelate epimerase family. As to quaternary structure, homodimer.

The protein resides in the cytoplasm. It catalyses the reaction (2S,6S)-2,6-diaminopimelate = meso-2,6-diaminopimelate. It functions in the pathway amino-acid biosynthesis; L-lysine biosynthesis via DAP pathway; DL-2,6-diaminopimelate from LL-2,6-diaminopimelate: step 1/1. In terms of biological role, catalyzes the stereoinversion of LL-2,6-diaminopimelate (L,L-DAP) to meso-diaminopimelate (meso-DAP), a precursor of L-lysine and an essential component of the bacterial peptidoglycan. The chain is Diaminopimelate epimerase from Psychrobacter sp. (strain PRwf-1).